An 81-amino-acid chain; its full sequence is Cysteine-rich and transmembrane domain-containing protein PCC1 (81 aa).

Positions 1–22 (MNQSAQNYFSVQKPSETSSGPY) are enriched in polar residues. The segment at 1-34 (MNQSAQNYFSVQKPSETSSGPYTSPPPIGYPTRD) is disordered. The chain crosses the membrane as a helical span at residues 56–74 (AIMSCFSTCMECIFCCGVC).

It belongs to the CYSTM1 family. Expressed at very low levels in seedlings and petioles, and at higher levels in leaves. Also present in phloem sap.

The protein resides in the cell membrane. Its function is as follows. Modulates resistance against pathogens including oomycetes (e.g. Hyaloperonospora parasitica and Phytophthora brassicae) and fungi (e.g. Phytophthora brassicae). Controls the abscisic acid-mediated (ABA) signaling pathways. Regulator of the flowering time in response to stress (e.g. UV-C). Regulates polar lipid content; promotes phosphatidylinositol (PI) and 18:0 but prevents 18:2 and 18:3 polar lipids accumulation. The chain is Cysteine-rich and transmembrane domain-containing protein PCC1 (PCC1) from Arabidopsis thaliana (Mouse-ear cress).